The following is a 362-amino-acid chain: Porin Omp2b (362 aa).

A signal peptide spans 1–22; sequence MNIKSLLLGSAAALVAASGAQA.

This sequence belongs to the alphaproteobacteria porin family. In terms of assembly, homotrimer.

The protein resides in the cell outer membrane. Forms passive diffusion pores that allow small molecular weight hydrophilic materials across the outer membrane. This is Porin Omp2b (omp2b) from Brucella suis biovar 1 (strain 1330).